A 542-amino-acid chain; its full sequence is Probable quinate permease (542 aa).

The Cytoplasmic portion of the chain corresponds to 1 to 22 (MSILALVEDRPTPKEVYNWKIY). The helical transmembrane segment at 23 to 43 (LLAAVASFTSCMIGYDSAFIG) threads the bilayer. Residues 44–74 (TTLALSSFREEFGFSTMSKTAVNLVSANIVS) are Extracellular-facing. Residues 75-95 (CYQAGAFFGAFFAYPIGHFWG) form a helical membrane-spanning segment. At 96 to 97 (RK) the chain is on the cytoplasmic side. The chain crosses the membrane as a helical span at residues 98 to 118 (WGLLFAGTIFTLGAGLMLGAN). The Extracellular segment spans residues 119–130 (GDRGLGLLYGGR). Residues 131 to 151 (VLAGLGVGAGSNITPIYISEM) form a helical membrane-spanning segment. Residues 152-159 (APPSIRGR) lie on the Cytoplasmic side of the membrane. The helical transmembrane segment at 160–180 (LVGVYELGWQIGGLVGFWINY) threads the bilayer. The Extracellular segment spans residues 181-193 (GVSETLAPSHKQW). A helical transmembrane segment spans residues 194–214 (IIPFAVQLIPSGLLLIGAVFL). Residues 215–285 (KESPRWLFSR…AGTNKKVMYR (71 aa)) are Cytoplasmic-facing. The chain crosses the membrane as a helical span at residues 286–306 (LFLGSMLFFWQNGSGINAINY). At 307 to 325 (YSPTVFKSIGLHGANTSMF) the chain is on the extracellular side. A helical transmembrane segment spans residues 326 to 346 (STGIFGVVKTVVTFVWLLYLI). Residues 347-352 (DRLGRR) lie on the Cytoplasmic side of the membrane. A helical membrane pass occupies residues 353–373 (LLLLIGAAGAAVCLLIVGAYI). Residues 374–387 (KIADPASNPTQEMT) are Extracellular-facing. Residues 388 to 408 (GGGIAAMFFFYLYTVFYTPSW) form a helical membrane-spanning segment. Residues 409–456 (NGTPWVMNSEMFEPNMRSLAQACAAASNWLWNFLISRFTPQMFAKMEY) are Cytoplasmic-facing. Residues 457 to 477 (GVWFFFASLMLLSIVFVFFLV) traverse the membrane as a helical segment. Over 478 to 542 (PETKGIPLES…EHVSEDLPKV (65 aa)) the chain is Extracellular. Residues 523–542 (GYSKTGEQQVEHVSEDLPKV) form a disordered region. Residues 531–542 (QVEHVSEDLPKV) are compositionally biased toward basic and acidic residues.

This sequence belongs to the major facilitator superfamily. Sugar transporter (TC 2.A.1.1) family. Interacts with creB. Post-translationally, ubiquitinated. Deubiquitinated by creB, probably to control its activity or amount.

It localises to the cell membrane. Its function is as follows. Integral membrane transporter that imports quinic acid to be catabolized as a carbon source. The protein is Probable quinate permease (qutD) of Aspergillus fumigatus (strain CBS 144.89 / FGSC A1163 / CEA10) (Neosartorya fumigata).